The following is a 639-amino-acid chain: Transcription factor phomR (639 aa).

Positions 14 to 41 (CWTCRLRRKKCNEGGPPCDNCEARGIHC) form a DNA-binding region, zn(2)-C6 fungal-type. Disordered regions lie at residues 58-136 (REEA…AGTG) and 476-499 (LPRS…TGPE). The span at 68 to 108 (SGRGRSYSRSSSTAAAAAPKPAEGAMVTGGSSSSSRGSGSS) shows a compositional bias: low complexity.

The protein localises to the nucleus. In terms of biological role, transcription factor; part of the gene cluster that mediates the biosynthesis of the phomopsins, a group of hexapeptide mycotoxins which infects lupins and causes lupinosis disease in livestock. May play a role in the regulation of the production of phomopsins. This is Transcription factor phomR from Diaporthe leptostromiformis (Lupinosis disease fungus).